Here is a 61-residue protein sequence, read N- to C-terminus: Cytotoxin homolog 2 (61 aa).

Intrachain disulfides connect C3-C22, C15-C39, C43-C54, and C55-C60.

It belongs to the three-finger toxin family. Short-chain subfamily. Orphan group XV sub-subfamily. As to expression, expressed by the venom gland.

The protein resides in the secreted. Its subcellular location is the target cell membrane. Its function is as follows. Has low cytotoxic activity. The sequence is that of Cytotoxin homolog 2 from Naja melanoleuca (Forest cobra).